The following is a 328-amino-acid chain: Type II secretion system protein K (328 aa).

The propeptide at 1–7 (MRSRQRG) is leader sequence. The chain crosses the membrane as a helical span at residues 8–28 (AALLVVLLILALMVTIAAVIT). Residues 29-328 (ERTGKAFLRT…QYGGYRTVNP (300 aa)) are Periplasmic-facing.

This sequence belongs to the GSP K family. In terms of assembly, type II secretion is composed of four main components: the outer membrane complex, the inner membrane complex, the cytoplasmic secretion ATPase and the periplasm-spanning pseudopilus. Interacts with core component OutG. Post-translationally, cleaved by prepilin peptidase.

Its subcellular location is the cell inner membrane. Component of the type II secretion system required for the energy-dependent secretion of extracellular factors such as proteases and toxins from the periplasm. Plays a role in pseudopilus assembly and seems to control its length. Interacts with the pseudopilus tip complex that is critical for the recognition and binding of secretion substrates. The chain is Type II secretion system protein K (outK) from Pectobacterium carotovorum subsp. carotovorum (Erwinia carotovora subsp. carotovora).